The chain runs to 238 residues: Small ribosomal subunit protein uS3 (238 aa).

The KH type-2 domain maps to 39-107 (MREFIHDYAK…ELHLNIVEIR (69 aa)). Residues 212-222 (PQAHDRRHSEA) show a composition bias toward basic and acidic residues. The interval 212 to 238 (PQAHDRRHSEAQEGAAPRPPRRDRERA) is disordered.

This sequence belongs to the universal ribosomal protein uS3 family. In terms of assembly, part of the 30S ribosomal subunit. Forms a tight complex with proteins S10 and S14.

Functionally, binds the lower part of the 30S subunit head. Binds mRNA in the 70S ribosome, positioning it for translation. In Cereibacter sphaeroides (strain ATCC 17029 / ATH 2.4.9) (Rhodobacter sphaeroides), this protein is Small ribosomal subunit protein uS3.